Here is a 159-residue protein sequence, read N- to C-terminus: SsrA-binding protein (159 aa).

Residues 132–159 (KDFDKRHTEKERDSDREIQRAMRHGKDD) are disordered.

The protein belongs to the SmpB family.

The protein localises to the cytoplasm. Its function is as follows. Required for rescue of stalled ribosomes mediated by trans-translation. Binds to transfer-messenger RNA (tmRNA), required for stable association of tmRNA with ribosomes. tmRNA and SmpB together mimic tRNA shape, replacing the anticodon stem-loop with SmpB. tmRNA is encoded by the ssrA gene; the 2 termini fold to resemble tRNA(Ala) and it encodes a 'tag peptide', a short internal open reading frame. During trans-translation Ala-aminoacylated tmRNA acts like a tRNA, entering the A-site of stalled ribosomes, displacing the stalled mRNA. The ribosome then switches to translate the ORF on the tmRNA; the nascent peptide is terminated with the 'tag peptide' encoded by the tmRNA and targeted for degradation. The ribosome is freed to recommence translation, which seems to be the essential function of trans-translation. The sequence is that of SsrA-binding protein from Pseudomonas aeruginosa (strain LESB58).